The chain runs to 284 residues: Putative ABC transporter ATP-binding protein MG468.1 homolog (284 aa).

Residues 53–284 enclose the ABC transporter domain; it reads VLFKGVCKAV…PKTINEINWV (232 aa). 89 to 96 is a binding site for ATP; that stretch reads GKSGSGKT.

The protein belongs to the ABC transporter superfamily.

The sequence is that of Putative ABC transporter ATP-binding protein MG468.1 homolog from Mycoplasma pneumoniae (strain ATCC 29342 / M129 / Subtype 1) (Mycoplasmoides pneumoniae).